Here is a 338-residue protein sequence, read N- to C-terminus: Nicotinate-nucleotide--dimethylbenzimidazole phosphoribosyltransferase (338 aa).

Catalysis depends on Glu305, which acts as the Proton acceptor.

The protein belongs to the CobT family.

It carries out the reaction 5,6-dimethylbenzimidazole + nicotinate beta-D-ribonucleotide = alpha-ribazole 5'-phosphate + nicotinate + H(+). It participates in nucleoside biosynthesis; alpha-ribazole biosynthesis; alpha-ribazole from 5,6-dimethylbenzimidazole: step 1/2. Functionally, catalyzes the synthesis of alpha-ribazole-5'-phosphate from nicotinate mononucleotide (NAMN) and 5,6-dimethylbenzimidazole (DMB). This Rhizobium rhizogenes (strain K84 / ATCC BAA-868) (Agrobacterium radiobacter) protein is Nicotinate-nucleotide--dimethylbenzimidazole phosphoribosyltransferase.